A 237-amino-acid polypeptide reads, in one-letter code: Demethylmenaquinone methyltransferase (237 aa).

Residues Thr-62, Asp-80, 102–103, and Ser-119 contribute to the S-adenosyl-L-methionine site; that span reads DA.

This sequence belongs to the class I-like SAM-binding methyltransferase superfamily. MenG/UbiE family.

The enzyme catalyses a 2-demethylmenaquinol + S-adenosyl-L-methionine = a menaquinol + S-adenosyl-L-homocysteine + H(+). The protein operates within quinol/quinone metabolism; menaquinone biosynthesis; menaquinol from 1,4-dihydroxy-2-naphthoate: step 2/2. In terms of biological role, methyltransferase required for the conversion of demethylmenaquinol (DMKH2) to menaquinol (MKH2). The protein is Demethylmenaquinone methyltransferase of Renibacterium salmoninarum (strain ATCC 33209 / DSM 20767 / JCM 11484 / NBRC 15589 / NCIMB 2235).